The following is a 175-amino-acid chain: Sec-independent protein translocase protein TatB (175 aa).

Residues 1–21 form a helical membrane-spanning segment; the sequence is MLDLGLSKMALIGVVALVVLG. Residues 99 to 115 show a composition bias toward low complexity; it reads GDPAAADASGGLGATSD. The disordered stretch occupies residues 99–118; that stretch reads GDPAAADASGGLGATSDEPS.

The protein belongs to the TatB family. The Tat system comprises two distinct complexes: a TatABC complex, containing multiple copies of TatA, TatB and TatC subunits, and a separate TatA complex, containing only TatA subunits. Substrates initially bind to the TatABC complex, which probably triggers association of the separate TatA complex to form the active translocon.

Its subcellular location is the cell inner membrane. In terms of biological role, part of the twin-arginine translocation (Tat) system that transports large folded proteins containing a characteristic twin-arginine motif in their signal peptide across membranes. Together with TatC, TatB is part of a receptor directly interacting with Tat signal peptides. TatB may form an oligomeric binding site that transiently accommodates folded Tat precursor proteins before their translocation. The sequence is that of Sec-independent protein translocase protein TatB from Burkholderia thailandensis (strain ATCC 700388 / DSM 13276 / CCUG 48851 / CIP 106301 / E264).